Reading from the N-terminus, the 179-residue chain is Large ribosomal subunit protein uL5 (179 aa).

This sequence belongs to the universal ribosomal protein uL5 family. As to quaternary structure, part of the 50S ribosomal subunit; part of the 5S rRNA/L5/L18/L25 subcomplex. Contacts the 5S rRNA and the P site tRNA. Forms a bridge to the 30S subunit in the 70S ribosome.

Functionally, this is one of the proteins that bind and probably mediate the attachment of the 5S RNA into the large ribosomal subunit, where it forms part of the central protuberance. In the 70S ribosome it contacts protein S13 of the 30S subunit (bridge B1b), connecting the 2 subunits; this bridge is implicated in subunit movement. Contacts the P site tRNA; the 5S rRNA and some of its associated proteins might help stabilize positioning of ribosome-bound tRNAs. This is Large ribosomal subunit protein uL5 from Pseudomonas putida (strain W619).